We begin with the raw amino-acid sequence, 171 residues long: Der GTPase-activating protein YihI (171 aa).

2 disordered regions span residues 1–99 (MKKP…QAEL) and 145–171 (LSYD…RGGN). The segment covering 20–30 (TREELNQEARD) has biased composition (basic and acidic residues). Residues 31 to 40 (RKRLKKHRGH) show a composition bias toward basic residues. A compositionally biased stretch (acidic residues) spans 147 to 160 (YDDDEEDDEEDEKQ).

The protein belongs to the YihI family. As to quaternary structure, interacts with Der.

A GTPase-activating protein (GAP) that modifies Der/EngA GTPase function. May play a role in ribosome biogenesis. The chain is Der GTPase-activating protein YihI from Salmonella agona (strain SL483).